The chain runs to 58 residues: Large ribosomal subunit protein bL32c (58 aa).

Belongs to the bacterial ribosomal protein bL32 family.

It is found in the plastid. Its subcellular location is the chloroplast. The polypeptide is Large ribosomal subunit protein bL32c (Chaetosphaeridium globosum (Charophycean green alga)).